Here is a 256-residue protein sequence, read N- to C-terminus: Small ribosomal subunit protein eS1 (256 aa).

The segment covering 1–18 has biased composition (basic residues); that stretch reads MAVGKNKRLSKGKKGLKK. Residues 1–20 are disordered; sequence MAVGKNKRLSKGKKGLKKRT. Position 2 is an N-acetylalanine; partial (A2).

This sequence belongs to the eukaryotic ribosomal protein eS1 family. In terms of assembly, component of the small ribosomal subunit. Mature ribosomes consist of a small (40S) and a large (60S) subunit. The 40S subunit contains about 33 different proteins and 1 molecule of RNA (18S). The 60S subunit contains about 49 different proteins and 3 molecules of RNA (25S, 5.8S and 5S).

It is found in the cytoplasm. The sequence is that of Small ribosomal subunit protein eS1 (rps1) from Talaromyces marneffei (strain ATCC 18224 / CBS 334.59 / QM 7333) (Penicillium marneffei).